Consider the following 355-residue polypeptide: Chemerin-like receptor 2 (355 aa).

The Extracellular portion of the chain corresponds to Met1–Ser41. N-linked (GlcNAc...) asparagine glycosylation occurs at Asn14. A helical transmembrane segment spans residues Leu42–Phe62. Topologically, residues Thr63–Thr73 are cytoplasmic. The helical transmembrane segment at Leu74 to Ile94 threads the bilayer. Topologically, residues Ser95–Ala112 are extracellular. Cysteines 110 and 187 form a disulfide. Residues Asn113–Leu133 form a helical membrane-spanning segment. At Asp134 to Ser154 the chain is on the cytoplasmic side. Residues Leu155–Phe175 form a helical membrane-spanning segment. Residues Arg176–Lys210 lie on the Extracellular side of the membrane. Residues Phe211–Phe231 form a helical membrane-spanning segment. Residues Lys232 to Thr247 lie on the Cytoplasmic side of the membrane. A helical transmembrane segment spans residues Ile248–Trp268. At Glu269–Ile286 the chain is on the extracellular side. A helical transmembrane segment spans residues Pro287–Ile307. At Ser308–Gln355 the chain is on the cytoplasmic side.

The protein belongs to the chemokine-like receptor (CMKLR) family. In terms of tissue distribution, expressed in hippocampus.

The protein resides in the cell membrane. Functionally, receptor for chemoattractant adipokine chemerin/RARRES2 suggesting a role for this receptor in the regulation of inflammation and energy homesotasis. Signals mainly via beta-arrestin pathway. Binding of RARRES2 activates weakly G proteins, calcium mobilization and MAPK1/MAPK3 (ERK1/2) phosphorylation too. Also acts as a receptor for TAFA1, mediates its effects on neuronal stem-cell proliferation and differentiation via the activation of ROCK/ERK and ROCK/STAT3 signaling pathway. Its function is as follows. (Microbial infection) Coreceptor for HIV-1. The sequence is that of Chemerin-like receptor 2 from Homo sapiens (Human).